A 378-amino-acid polypeptide reads, in one-letter code: Queuine tRNA-ribosyltransferase (378 aa).

Catalysis depends on aspartate 89, which acts as the Proton acceptor. Substrate is bound by residues 89-93, aspartate 143, glutamine 194, and glycine 221; that span reads DSGGF. The RNA binding stretch occupies residues 252 to 258; that stretch reads GVGTPAN. Catalysis depends on aspartate 271, which acts as the Nucleophile. Positions 276-280 are RNA binding; important for wobble base 34 recognition; that stretch reads ARNGR. Cysteine 309, cysteine 311, cysteine 314, and histidine 340 together coordinate Zn(2+).

The protein belongs to the queuine tRNA-ribosyltransferase family. In terms of assembly, homodimer. Within each dimer, one monomer is responsible for RNA recognition and catalysis, while the other monomer binds to the replacement base PreQ1. It depends on Zn(2+) as a cofactor.

The enzyme catalyses 7-aminomethyl-7-carbaguanine + guanosine(34) in tRNA = 7-aminomethyl-7-carbaguanosine(34) in tRNA + guanine. The protein operates within tRNA modification; tRNA-queuosine biosynthesis. In terms of biological role, catalyzes the base-exchange of a guanine (G) residue with the queuine precursor 7-aminomethyl-7-deazaguanine (PreQ1) at position 34 (anticodon wobble position) in tRNAs with GU(N) anticodons (tRNA-Asp, -Asn, -His and -Tyr). Catalysis occurs through a double-displacement mechanism. The nucleophile active site attacks the C1' of nucleotide 34 to detach the guanine base from the RNA, forming a covalent enzyme-RNA intermediate. The proton acceptor active site deprotonates the incoming PreQ1, allowing a nucleophilic attack on the C1' of the ribose to form the product. After dissociation, two additional enzymatic reactions on the tRNA convert PreQ1 to queuine (Q), resulting in the hypermodified nucleoside queuosine (7-(((4,5-cis-dihydroxy-2-cyclopenten-1-yl)amino)methyl)-7-deazaguanosine). This chain is Queuine tRNA-ribosyltransferase, found in Lachnoclostridium phytofermentans (strain ATCC 700394 / DSM 18823 / ISDg) (Clostridium phytofermentans).